The sequence spans 2121 residues: Non-reducing polyketide synthase aoiG (2121 aa).

The Starter acyltransferase (SAT) domain maps to 5 to 258 (YIFGDQTVRV…LPVSIYAPYH (254 aa)). One can recognise a Ketosynthase family 3 (KS3) domain in the interval 386 to 817 (SSKIAIIGFS…GGNTAVLVED (432 aa)). Active-site for beta-ketoacyl synthase activity residues include Cys-558, His-693, and His-735. The Malonyl-CoA:ACP transacylase (MAT) domain occupies 921–1239 (FLFTGQGAQQ…LSVLHLAGVR (319 aa)). An N-terminal hotdog fold region spans residues 1302–1433 (QKILEEEMTA…CTIELQRPHQ (132 aa)). A PKS/mFAS DH domain is found at 1302 to 1608 (QKILEEEMTA…FQKVARRVLE (307 aa)). The Proton acceptor; for dehydratase activity role is filled by His-1334. The segment at 1461–1608 (THKMRRGVAY…FQKVARRVLE (148 aa)) is C-terminal hotdog fold. Asp-1519 (proton donor; for dehydratase activity) is an active-site residue. A Carrier 1 domain is found at 1646–1723 (PHVEDAWQQV…SLRIYLNMSS (78 aa)). Ser-1683 is modified (O-(pantetheine 4'-phosphoryl)serine). Low complexity predominate over residues 1728-1752 (DSIETSSYPTPDESTTTTITSPSGS). Residues 1728-1760 (DSIETSSYPTPDESTTTTITSPSGSDRNVGRNS) are disordered. A Carrier 2 domain is found at 1763-1840 (DGVGTTVGLV…AITAALHAIF (78 aa)). O-(pantetheine 4'-phosphoryl)serine is present on Ser-1800. The segment at 1872–1976 (TLFLFPDGSG…ILIDSPNPMG (105 aa)) is TE/CLC (thioesterase/Claisen cyclase) domain.

The cofactor is pantetheine 4'-phosphate.

Its function is as follows. Non-reducing polyketide synthase; part of the gene cluster that mediates the biosynthesis of a methylated derivative of known natural products orthosporin and diaporthin. AoiG catalyzes the biosynthesis of the hexaketide isocoumarin scaffold, via condensation of one acetyl-CoA starter unit with 6 malonyl-CoA units. An oxidoreductase that has still to be identified catalyzes the stereospecific reduction of the carbonyl moiety of the hexaketide isocoumarin scaffold to generate the S-configured secondary alcohol at C-11 of orthosporin. The methyltrasferase aoiF then catalyzes the biotransformation of not only orthosporin to diaporthin but also diaporthin to the final product, by performing a tandem methylation of the polyketide core. In Aspergillus oryzae (strain ATCC 42149 / RIB 40) (Yellow koji mold), this protein is Non-reducing polyketide synthase aoiG.